The primary structure comprises 280 residues: Phosphatidylglycerol--prolipoprotein diacylglyceryl transferase (280 aa).

4 helical membrane passes run 12–32 (FGPFVLRWYGLLIAAAVLIGL), 52–72 (LLPLLVLFSVIGARIYYVAFE), 86–106 (IWEGGIAIHGALIAGTLTLIL), and 115–133 (FWDVLDVLVPSVALGQSIG). Arginine 134 provides a ligand contact to a 1,2-diacyl-sn-glycero-3-phospho-(1'-sn-glycerol). A run of 3 helical transmembrane segments spans residues 173–193 (PTFLYESLWNLALFIILILLF), 203–223 (LPAGAMSCIYLMGYSLGRVWI), and 246–266 (IAQLMSGVMALAGSLGLWWLY).

The protein belongs to the Lgt family.

It localises to the cell inner membrane. It carries out the reaction L-cysteinyl-[prolipoprotein] + a 1,2-diacyl-sn-glycero-3-phospho-(1'-sn-glycerol) = an S-1,2-diacyl-sn-glyceryl-L-cysteinyl-[prolipoprotein] + sn-glycerol 1-phosphate + H(+). It functions in the pathway protein modification; lipoprotein biosynthesis (diacylglyceryl transfer). Functionally, catalyzes the transfer of the diacylglyceryl group from phosphatidylglycerol to the sulfhydryl group of the N-terminal cysteine of a prolipoprotein, the first step in the formation of mature lipoproteins. This Synechococcus sp. (strain CC9902) protein is Phosphatidylglycerol--prolipoprotein diacylglyceryl transferase.